A 702-amino-acid polypeptide reads, in one-letter code: Heparin-sulfate lyase (702 aa).

The first 17 residues, 1-17 (MKNIFFICFCALFAFSG), serve as a signal peptide directing secretion. The active-site Proton acceptor is the Y314.

It belongs to the polysaccharide lyase 12 family.

Its subcellular location is the periplasm. It carries out the reaction Elimination of sulfate, appears to act on linkages between N-acetyl-D-glucosamine and uronate. Product is an unsaturated sugar.. Its function is as follows. Specifically cleaves heparan sulfate-rich regions of acidic polysaccharides. Does not act on N,O-desulfated glucosamine or N-acetyl-O-sulfated glucosamine linkages. Functions in cleaving metazoan heparan sulfate and providing carbon, nitrogen and sulfate sources for microorganisms. The chain is Heparin-sulfate lyase (hepC) from Bacteroides thetaiotaomicron (strain ATCC 29148 / DSM 2079 / JCM 5827 / CCUG 10774 / NCTC 10582 / VPI-5482 / E50).